The following is a 408-amino-acid chain: Glutamate N-acetyltransferase (408 aa).

6 residues coordinate substrate: threonine 150, lysine 176, threonine 189, glutamate 271, asparagine 403, and threonine 408. The active-site Nucleophile is threonine 189.

It belongs to the ArgJ family. Heterotetramer of two alpha and two beta chains.

The protein resides in the cytoplasm. It catalyses the reaction N(2)-acetyl-L-ornithine + L-glutamate = N-acetyl-L-glutamate + L-ornithine. Its pathway is amino-acid biosynthesis; L-arginine biosynthesis; L-ornithine and N-acetyl-L-glutamate from L-glutamate and N(2)-acetyl-L-ornithine (cyclic): step 1/1. Functionally, catalyzes the transfer of the acetyl group from N(2)-acetylornithine to glutamate, forming N-acetylglutamate and L-ornithine. This chain is Glutamate N-acetyltransferase, found in Methanococcus maripaludis (strain C6 / ATCC BAA-1332).